A 145-amino-acid chain; its full sequence is Cell wall teichoic acid glycosylation protein GtcA (145 aa).

Helical transmembrane passes span 21–41 (ILMY…TFWL), 52–69 (IANT…YFSN), 96–116 (FLTY…LSIN), and 121–141 (KIWT…WIIF).

Belongs to the GtrA family.

Its subcellular location is the cell membrane. Functionally, involved in the decoration of cell wall teichoic acid with galactose and glucose. In Listeria monocytogenes serovar 1/2a (strain ATCC BAA-679 / EGD-e), this protein is Cell wall teichoic acid glycosylation protein GtcA (gtcA).